The chain runs to 279 residues: RxLR effector protein Avh331 (279 aa).

Positions 1–20 (MMQWSAILIRTCFSGSGGEA) are cleaved as a signal peptide. The RxLR-dEER motif lies at 86–106 (RSLRSQATNVDDDANVSIENR). Asn100 is a glycosylation site (N-linked (GlcNAc...) asparagine). A W1 motif region spans residues 129-147 (ANKLWLMADVDPKSAFKLL). Residues 153 to 174 (GVRFIDNPKMLQWLKFTKAYLD) form a Y1 motif region. The tract at residues 178 to 208 (SGFGETSAHALLYEKIGGPDLSLLLLSLKDA) is l motif. The interval 222 to 240 (QFGMWHDARIEPEQLAQTV) is W2 motif. Residues 250-271 (PKNDPKLQVIDDYAKYHRKHRK) are Y2 motif.

It belongs to the RxLR effector family.

The protein resides in the secreted. The protein localises to the host cell. Functionally, effector that suppresses the host mitogen-activated protein kinase (MAPK)-based plant defense activated by the Phytophthora elicitor to promote colonization of the Phytophthora pathogen. Neither directly inhibits MAPK kinase activity nor interacts with MAPK proteins but acts downstream by suppressing transcriptional activation of resistance marker genes such as FRK1, WRKY22 and WRKY29. Confers avirulence in the presence of resistance protein Rps1k in host. The polypeptide is RxLR effector protein Avh331 (Phytophthora sojae (strain P6497) (Soybean stem and root rot agent)).